The sequence spans 151 residues: Urease accessory protein UreE (151 aa).

This sequence belongs to the UreE family.

It is found in the cytoplasm. In terms of biological role, involved in urease metallocenter assembly. Binds nickel. Probably functions as a nickel donor during metallocenter assembly. This is Urease accessory protein UreE from Lachnoclostridium phytofermentans (strain ATCC 700394 / DSM 18823 / ISDg) (Clostridium phytofermentans).